We begin with the raw amino-acid sequence, 159 residues long: Thioredoxin O2, mitochondrial (159 aa).

The residue at position 40 (serine 40) is a Phosphoserine. In terms of domain architecture, Thioredoxin spans 43 to 159 (FAEGDRSSFV…LKSVMEQLYK (117 aa)). Active-site nucleophile residues include cysteine 83 and cysteine 86. A disulfide bond links cysteine 83 and cysteine 86.

It belongs to the thioredoxin family. Plant O-type subfamily.

Its subcellular location is the mitochondrion. Its function is as follows. Thiol-disulfide oxidoreductase that may participate in various redox reactions. Possesses insulin disulfide bonds reducing activity. Reduced by thioredoxin reductases NTRA and NTRB. This is Thioredoxin O2, mitochondrial from Arabidopsis thaliana (Mouse-ear cress).